Reading from the N-terminus, the 133-residue chain is Small ribosomal subunit protein bS6 (133 aa).

Belongs to the bacterial ribosomal protein bS6 family.

Binds together with bS18 to 16S ribosomal RNA. The sequence is that of Small ribosomal subunit protein bS6 from Chlorobium limicola (strain DSM 245 / NBRC 103803 / 6330).